The sequence spans 421 residues: Glucan 1,3-beta-glucosidase (421 aa).

The first 15 residues, 1-15 (MKLTKLVALAGAALA), serve as a signal peptide directing secretion. The Proton donor role is filled by E213. Disulfide bonds link C296–C419 and C321–C347. The active-site Nucleophile is the E313.

It belongs to the glycosyl hydrolase 5 (cellulase A) family.

Its subcellular location is the secreted. It carries out the reaction Successive hydrolysis of beta-D-glucose units from the non-reducing ends of (1-&gt;3)-beta-D-glucans, releasing alpha-glucose.. This chain is Glucan 1,3-beta-glucosidase (EXG1), found in Yarrowia lipolytica (strain CLIB 122 / E 150) (Yeast).